A 2550-amino-acid polypeptide reads, in one-letter code: Highly reducing polyketide synthase otaA (2550 aa).

Residues 9 to 431 (SEPLAIIGLA…GTNAHAVVED (423 aa)) enclose the Ketosynthase family 3 (KS3) domain. Active-site for beta-ketoacyl synthase activity residues include cysteine 182, histidine 317, and histidine 355. Residues 572 to 894 (FVFTGQGANW…KRYETNGSTI (323 aa)) are malonyl-CoA:ACP transacylase (MAT) domain. Residues 959–1094 (HELLGVPVED…GSVRAETGPP (136 aa)) are N-terminal hotdog fold. A dehydratase (DH) domain region spans residues 959–1252 (HELLGVPVED…DLVQLPANND (294 aa)). In terms of domain architecture, PKS/mFAS DH spans 959–1253 (HELLGVPVED…LVQLPANNDD (295 aa)). The C-terminal hotdog fold stretch occupies residues 1107-1253 (AEPVDIAQMY…LVQLPANNDD (147 aa)). Residues isoleucine 1420 and glutamate 1442 each contribute to the S-adenosyl-L-methionine site. Residues 1433 to 1612 (HAQTGIKILE…GLRPRLIIND (180 aa)) are methyltransferase (CMeT) domain. Residues 1859–1919 (PDEVKIRIHA…DQVMALRTGP (61 aa)) form an enoyl reductase (ER) (ER) domain region. Positions 2166 to 2345 (ASYLLIGGFG…PATSVSLGSV (180 aa)) are ketoreductase (KR) domain. In terms of domain architecture, Carrier spans 2454–2531 (AAVEVVTRAI…QLAQQAADAS (78 aa)). The residue at position 2491 (serine 2491) is an O-(pantetheine 4'-phosphoryl)serine.

Requires pantetheine 4'-phosphate as cofactor.

It carries out the reaction 4 malonyl-CoA + acetyl-CoA + 5 NADPH + 9 H(+) = 7-methylmellein + 3 CO2 + 5 NADP(+) + 5 CoA + 4 H2O. It participates in mycotoxin biosynthesis. Functionally, highly reducing polyketide synthase; part of the gene cluster that mediates the biosynthesis of ochratoxin A (OTA), a mycotoxin composed of a chlorinated type I polyketide dihydroisocoumarin moiety linked to L-phenylalanine, and demonstrated to have nephrotoxic, immunotoxic, genotoxic, neurotoxic, and teratogenic properties. OtaA catalyzes the condensation of one acetate and 4 malonate units to form the isocoumarin group. The pathway begins with the highly reducing polyketide synthase otaA that catalyzes the formation of the isocoumarin group during the initial stages of biosynthesis, starting from one acetate and 4 malonate units, to originate the characteristic pentaketide skeleton 7-methylmellein (7-MM) of the OTA molecule. The newly identified cyclase otaY might be involved in the polyketide cyclization reaction during the initial steps of the OTA biosynthesis. 7-MM is then oxidized into 7-carboxymellein (also called ochratoxin beta) by the cytochrome P450 monooxygenase otaC. The NRPS encoded by the otaB gene is involved in the linking of phenylalanine to the dihydroisocoumarin ring. The reaction catalyzed by NRPS results in the production of ochratoxin B (OTB), which is the non-chlorinated analog of OTA and which subsequently serves as the substrate of the halogenase otaD for chlorination activity to form the final molecular structure of OTA, containing a chlorine atom in the C-5 position of the molecule. The sequence is that of Highly reducing polyketide synthase otaA from Aspergillus niger (strain ATCC MYA-4892 / CBS 513.88 / FGSC A1513).